Here is an 820-residue protein sequence, read N- to C-terminus: Potassium channel GORK (820 aa).

Over 1–69 the chain is Cytoplasmic; the sequence is MGRLRRRQEI…PKNRWYKAWE (69 aa). Residues 70-90 traverse the membrane as a helical segment; sequence MFILVWAIYSSLFTPMEFGFF. The Extracellular portion of the chain corresponds to 91 to 97; it reads RGLPERL. A helical membrane pass occupies residues 98 to 118; sequence FVLDIVGQIAFLVDIVLQFFV. Over 119 to 141 the chain is Cytoplasmic; sequence AYRDTQTYRTVYKPTRIAFRYLK. The helical transmembrane segment at 142–162 threads the bilayer; that stretch reads SHFLMDFIGCFPWDLIYKASG. Residues 163 to 168 are Extracellular-facing; that stretch reads KHELVR. The chain crosses the membrane as a helical; Voltage-sensor span at residues 169 to 189; the sequence is YLLWIRLFRVRKVVEFFQRLE. Over 190-203 the chain is Cytoplasmic; the sequence is KDTRINYLFTRILK. A helical transmembrane segment spans residues 204 to 224; that stretch reads LLFVEVYCTHTAACIFYYLAT. The Extracellular segment spans residues 225-259; it reads TLPPENEGYTWIGSLKLGDYSYENFREIDLWKRYT. An intramembrane region (pore-forming) is located at residues 260-279; that stretch reads TALYFAIVTMATVGYGDIHA. Residues 280 to 285 lie on the Extracellular side of the membrane; it reads VNLREM. A helical transmembrane segment spans residues 286–306; the sequence is IFVMIYVSFDMVLGAYLIGNI. At 307 to 820 the chain is on the cytoplasmic side; that stretch reads TALIVKGSNT…YMISDTTDQT (514 aa). 386-508 contacts a nucleoside 3',5'-cyclic phosphate; sequence LFKGCSTEFI…ILNNIMEEKE (123 aa). ANK repeat units follow at residues 528–559, 563–592, 596–625, 627–656, 660–689, and 693–722; these read EAEL…DPNK, DGRS…DVNL, FGHT…SFNL, DSGN…NPNS, DHRT…SVIS, and WGNS…AQSS. A KHA domain is found at 740-820; the sequence is KCTVFPFHPQ…YMISDTTDQT (81 aa).

This sequence belongs to the potassium channel family. Plant (TC 1.A.1.4) subfamily. The potassium channel is probably composed of a homo- or heterotetrameric complex of pore-forming subunits. As to expression, expressed in guard cell-containing tissues, in root epidermal cells and in root hairs. Detected in vascular cells of the root and shoot.

It localises to the membrane. In terms of biological role, major selective outward-rectifying potassium channel of the guard cell membrane. Involved in regulation of stomatal movements according to the water status. Assuming opened or closed conformations in response to the voltage difference across the membrane, the channel is activated by depolarization. Conductance of the channel is modulated in a potassium-dependent fashion. May interact with the cytoskeleton or with regulatory proteins. The chain is Potassium channel GORK (GORK) from Arabidopsis thaliana (Mouse-ear cress).